The following is a 94-amino-acid chain: MRTLAILAAILLVALQAQAEPLQARADEVAAAPEQIAADIPEVVVSLAWDESLAPKHPGSRKNMDCYCRIPACIAGERRYGTCIYQGRLWAFCC.

Residues 1–19 form the signal peptide; sequence MRTLAILAAILLVALQAQA. Positions 20–38 are excised as a propeptide; the sequence is EPLQARADEVAAAPEQIAA. Disulfide bonds link C66/C94, C68/C83, and C73/C93.

Belongs to the alpha-defensin family. In terms of assembly, dimer. As to quaternary structure, (Microbial infection) Interacts with herpes virus 1 HHV-1 envelope glycoprotein B; this interaction inhibits viral infection.

Its subcellular location is the secreted. Its function is as follows. Effector molecule of the innate immune system that acts via antibiotic-like properties against a broad array of infectious agents including bacteria, fungi, and viruses. Possesses the ability to neutralize bacterial toxins such as B.anthracis lethal factor, Clostridium difficile cytotoxin B as well as leukocidin produced by Staphylococcus aureus. Also blocks herpes simplex virus infection by interacting with envelope glycoprotein B and thus preventing its binding to heparan sulfate, the receptor for attachment. The polypeptide is Neutrophil defensin 3 (DEFA3) (Homo sapiens (Human)).